A 119-amino-acid polypeptide reads, in one-letter code: uncharacterized protein (119 aa).

The tract at residues 86-119 (KKQRMKMLTEQEEEEEEEEEEPPKPKKKVINRKK) is disordered. A compositionally biased stretch (acidic residues) spans 95 to 106 (EQEEEEEEEEEE). The segment covering 110–119 (PKKKVINRKK) has biased composition (basic residues).

This is an uncharacterized protein from Sputnik virophage.